The sequence spans 304 residues: Putative S-adenosyl-L-methionine-dependent methyltransferase YktD (304 aa).

S-adenosyl-L-methionine is bound by residues Asp-134 and 163 to 164 (DF).

It belongs to the UPF0677 family.

In terms of biological role, may be involved in polyketide synthesis. The sequence is that of Putative S-adenosyl-L-methionine-dependent methyltransferase YktD (yktD) from Bacillus subtilis (strain 168).